Here is a 253-residue protein sequence, read N- to C-terminus: Chitooligosaccharide deacetylase (253 aa).

Histidine 61 and histidine 126 together coordinate Mg(2+).

Belongs to the YdjC deacetylase family. ChbG subfamily. As to quaternary structure, homodimer. It depends on Mg(2+) as a cofactor.

It localises to the cytoplasm. The catalysed reaction is N,N'-diacetylchitobiose + H2O = N-acetyl-beta-D-glucosaminyl-(1-&gt;4)-D-glucosamine + acetate. It carries out the reaction diacetylchitobiose-6'-phosphate + H2O = N'-monoacetylchitobiose-6'-phosphate + acetate. It functions in the pathway glycan degradation; chitin degradation. Functionally, involved in the degradation of chitin. ChbG is essential for growth on the acetylated chitooligosaccharides chitobiose and chitotriose but is dispensable for growth on cellobiose and chitosan dimer, the deacetylated form of chitobiose. Deacetylation of chitobiose-6-P and chitotriose-6-P is necessary for both the activation of the chb promoter by the regulatory protein ChbR and the hydrolysis of phosphorylated beta-glucosides by the phospho-beta-glucosidase ChbF. Catalyzes the removal of only one acetyl group from chitobiose-6-P to yield monoacetylchitobiose-6-P, the inducer of ChbR and the substrate of ChbF. The polypeptide is Chitooligosaccharide deacetylase (Serratia marcescens).